The sequence spans 221 residues: Nuclear phosphoprotein UL3 homolog (221 aa).

This sequence belongs to the alphaherpesvirinae HHV-1 UL3 family. Phosphorylated.

Its subcellular location is the host nucleus. This Varicella-zoster virus (strain Dumas) (HHV-3) protein is Nuclear phosphoprotein UL3 homolog.